The following is a 325-amino-acid chain: Melanocortin receptor 5 (325 aa).

The Extracellular portion of the chain corresponds to 1–37; the sequence is MNSSSTLTVLNLTLNASEDGILGSNVKNKSLACEEMG. N-linked (GlcNAc...) asparagine glycosylation is found at N2, N11, N15, and N28. The helical transmembrane segment at 38–61 threads the bilayer; it reads IAVEVFLTLGLVSLLENILVIGAI. Over 62 to 73 the chain is Cytoplasmic; it reads VKNKNLHSPMYF. Residues 74-97 form a helical membrane-spanning segment; that stretch reads FVGSLAVADMLVSMSNAWETVTIY. Residues 98–114 lie on the Extracellular side of the membrane; it reads LLNNKHLVIADTFVRHI. Residues 115–138 form a helical membrane-spanning segment; it reads DNVFDSMICISVVASMCSLLAIAV. Over 139-155 the chain is Cytoplasmic; it reads DRYITIFYALRYHHIMT. The helical transmembrane segment at 156-179 threads the bilayer; that stretch reads ARRSGVIIACIWTFCISCGIVFII. The Extracellular segment spans residues 180–186; sequence YYESKYV. Residues 187–211 form a helical membrane-spanning segment; the sequence is IICLISMFFTMLFFMVSLYIHMFLL. Residues 212–239 are Cytoplasmic-facing; sequence ARNHVKRIAASPRYNSVRQRTSMKGAIT. The chain crosses the membrane as a helical span at residues 240-265; the sequence is LTMLLGIFIVCWSPFFLHLILMISCP. The Extracellular segment spans residues 266 to 273; sequence QNVYCSCF. A helical membrane pass occupies residues 274–297; sequence MSYFNMYLILIMCNSVIDPLIYAL. The Cytoplasmic segment spans residues 298–325; sequence RSQEMRRTFKEIVCCHGFRRPCRLLGGY. Residues C311 and C312 are each lipidated (S-palmitoyl cysteine).

It belongs to the G-protein coupled receptor 1 family. Skin, adrenal gland, skeletal muscle, bone marrow, spleen, thymus, gonads, uterus and brain.

It localises to the cell membrane. Its function is as follows. Receptor for MSH (alpha, beta and gamma) and ACTH. The activity of this receptor is mediated by G proteins which activate adenylate cyclase. This receptor is a possible mediator of the immunomodulation properties of melanocortins. This is Melanocortin receptor 5 (Mc5r) from Mus musculus (Mouse).